Reading from the N-terminus, the 469-residue chain is MTNLTLMNQLTPKQIVEKLDQYIIGQTGAKKSVAVALRNRYRRQLMDESIRDEIIPKNILMIGPTGVGKTEIARRIAKIVRAPFSKVEATKFTEVGYVGRDVESMVRDLVEVSVRLVKEEKMQLVRVKAEKNAEKRLIKLLAPSQKKKQTTTQNPIEALFGGMNQSEETTEEEVDQELKNKRSQIEWRLQNGELDDEIVTVEVKEQQNPMLDMMRGAGMDQMNGMQDALSGMFPAKKKKRKVTVREAKKILFEDEASKLIDADELAAEGIHRAEQMGMIFIDEIDKIASKEGGGNAQVSREGVQRDILPIVEGSQISTKYGTVNTEYILFIAAGAFHMSKPSDLIPELQGRFPIRIELDKLTQEDFYKILTEPDNALIKQYKALLKTEGIDLIFTKEAVERIAEIAFQVNQDSDNIGARRLHTILEKLLEDLLFEAPEINMESIKVTENYVNEKLAPIMKNKDLTQFIL.

Residues Ile-24, 66–71 (GVGKTE), Asp-282, Glu-347, and Arg-419 each bind ATP.

This sequence belongs to the ClpX chaperone family. HslU subfamily. A double ring-shaped homohexamer of HslV is capped on each side by a ring-shaped HslU homohexamer. The assembly of the HslU/HslV complex is dependent on binding of ATP.

Its subcellular location is the cytoplasm. In terms of biological role, ATPase subunit of a proteasome-like degradation complex; this subunit has chaperone activity. The binding of ATP and its subsequent hydrolysis by HslU are essential for unfolding of protein substrates subsequently hydrolyzed by HslV. HslU recognizes the N-terminal part of its protein substrates and unfolds these before they are guided to HslV for hydrolysis. This is ATP-dependent protease ATPase subunit HslU from Listeria welshimeri serovar 6b (strain ATCC 35897 / DSM 20650 / CCUG 15529 / CIP 8149 / NCTC 11857 / SLCC 5334 / V8).